Reading from the N-terminus, the 639-residue chain is Transcription factor phomR (639 aa).

Positions C14–C41 form a DNA-binding region, zn(2)-C6 fungal-type. Disordered regions lie at residues R58–G136 and L476–E499. Low complexity predominate over residues S68–S108.

It is found in the nucleus. Its function is as follows. Transcription factor; part of the gene cluster that mediates the biosynthesis of the phomopsins, a group of hexapeptide mycotoxins which infects lupins and causes lupinosis disease in livestock. May play a role in the regulation of the production of phomopsins. The polypeptide is Transcription factor phomR (Diaporthe leptostromiformis (Lupinosis disease fungus)).